The chain runs to 273 residues: Ribosomal RNA small subunit methyltransferase A (273 aa).

The S-adenosyl-L-methionine site is built by Asn18, Leu20, Gly45, Glu66, Asp91, and Asn113.

It belongs to the class I-like SAM-binding methyltransferase superfamily. rRNA adenine N(6)-methyltransferase family. RsmA subfamily.

It is found in the cytoplasm. It catalyses the reaction adenosine(1518)/adenosine(1519) in 16S rRNA + 4 S-adenosyl-L-methionine = N(6)-dimethyladenosine(1518)/N(6)-dimethyladenosine(1519) in 16S rRNA + 4 S-adenosyl-L-homocysteine + 4 H(+). Its function is as follows. Specifically dimethylates two adjacent adenosines (A1518 and A1519) in the loop of a conserved hairpin near the 3'-end of 16S rRNA in the 30S particle. May play a critical role in biogenesis of 30S subunits. The sequence is that of Ribosomal RNA small subunit methyltransferase A from Salmonella typhimurium (strain LT2 / SGSC1412 / ATCC 700720).